The primary structure comprises 92 residues: Small ribosomal subunit protein uS19 (92 aa).

Belongs to the universal ribosomal protein uS19 family.

Protein S19 forms a complex with S13 that binds strongly to the 16S ribosomal RNA. This Acidiphilium cryptum (strain JF-5) protein is Small ribosomal subunit protein uS19.